Reading from the N-terminus, the 674-residue chain is Tripartite terminase subunit 3 (674 aa).

Residues 212–219 carry the Walker A motif motif; sequence VPRRHGKT. A Walker B motif motif is present at residues 305-310; it reads LLLVDE. The active-site For ATPase activity is Glu-310. Catalysis depends on for nuclease activity residues Asp-463, Glu-534, and Asp-651.

This sequence belongs to the herpesviridae TRM3 protein family. As to quaternary structure, interacts with the terminase subunits TRM1 and TRM2. Interacts with portal protein.

It is found in the host nucleus. Functionally, component of the molecular motor that translocates viral genomic DNA in empty capsid during DNA packaging. Forms a tripartite terminase complex together with TRM1 and TRM2 in the host cytoplasm. Once the complex reaches the host nucleus, it interacts with the capsid portal vertex. This portal forms a ring in which genomic DNA is translocated into the capsid. TRM3 carries an RNase H-like nuclease activity that plays an important role for the cleavage of concatemeric viral DNA into unit length genomes. The sequence is that of Tripartite terminase subunit 3 from Homo sapiens (Human).